The following is a 338-amino-acid chain: MISTMIPSRGLIEAAFPGFAVSALVAATAQFLSDHYGAPAMLLALLLGLALNFLAEDGTRTAPGVAFTARTVLRLGVALLGARISAGMLAALGPGAIALVAAGVVLTILFALAASRLVGRGWRFALLTGGSVAICGASAAMAIAAVLPRHEKSERDLVFTVLSVTVLSTVAMVLYPMLAGFFGFTARDSGVFLGGTIHDVAQVVGAGFSIGPEAGETATLVKLIRVSMLAPVVLCFSLAIRARGLADSRGGKAPPLLPGFVIGFLVLAALNSLGLVPAAVSELAGQLSRWALLIAIAAVGIKTSLKKMFEVGTGAIALILAETVFLAVFVTIGLHVLG.

Transmembrane regions (helical) follow at residues 12-31, 36-55, 75-92, 96-118, 125-147, 162-184, 191-213, 223-245, 258-280, and 315-337; these read IEAA…TAQF, YGAP…NFLA, LGVA…LAAL, AIAL…SRLV, ALLT…AAVL, LSVT…FFGF, VFLG…IGPE, LIRV…ARGL, PGFV…PAAV, and AIAL…LHVL.

This sequence belongs to the UPF0324 family.

The protein resides in the cell membrane. The polypeptide is UPF0324 membrane protein TauZ (tauZ) (Paracoccus denitrificans).